A 20-amino-acid polypeptide reads, in one-letter code: Cytolysin tenebrosin-A (20 aa).

The segment at 3 to 12 (AVAGAVIEGA) is plays an important role in the hemolytic activity. The segment at 11 to 20 (GATLTFEVLQ) is N-terminal region.

Belongs to the actinoporin family. Sea anemone subfamily. In terms of assembly, octamer or nonamer in membranes. Monomer in the soluble state.

The protein localises to the secreted. The protein resides in the nematocyst. It localises to the target cell membrane. Its function is as follows. Pore-forming protein that forms cations-selective hydrophilic pores of around 1 nm and causes cardiac stimulation and cytolysis. Pore formation is a multi-step process that involves specific recognition of membrane sphingomyelin (but neither cholesterol nor phosphatidylcholine) using aromatic rich region and adjacent phosphocholine (POC) binding site, firm binding to the membrane (mainly driven by hydrophobic interactions) accompanied by the transfer of the N-terminal region to the lipid-water interface and finally pore formation after oligomerization of monomers. The chain is Cytolysin tenebrosin-A from Actinia tenebrosa (Australian red waratah sea anemone).